The following is an 85-amino-acid chain: MDPKKIARINELAKKKKTEGLTAEEKVEQAKLREEYIEGYRRSVRHHIEGIKIVDEDGNDVTPEKLRQVQREKGLHGRSLDDPNS.

The segment at 56 to 85 (EDGNDVTPEKLRQVQREKGLHGRSLDDPNS) is disordered. Positions 62 to 85 (TPEKLRQVQREKGLHGRSLDDPNS) are enriched in basic and acidic residues.

Belongs to the UPF0291 family.

It is found in the cytoplasm. This Streptococcus gordonii (strain Challis / ATCC 35105 / BCRC 15272 / CH1 / DL1 / V288) protein is UPF0291 protein SGO_0570.